Consider the following 421-residue polypeptide: Subtilisin-like protease 2 (421 aa).

A signal peptide spans 1–16 (MQLLNFGLLLLPFVAG). Residues 17 to 122 (DLAPQPEPLL…VHPDQHVYLA (106 aa)) constitute a propeptide that is removed on maturation. One can recognise an Inhibitor I9 domain in the interval 36-122 (QYIVTLKEGL…VHPDQHVYLA (87 aa)). The Peptidase S8 domain occupies 131-421 (RWGLGYMSSK…ERKFTLPKYY (291 aa)). Active-site charge relay system residues include Asp169 and His201. N-linked (GlcNAc...) asparagine glycosylation is found at Asn248, Asn261, and Asn348. The Charge relay system role is filled by Ser357. Asn388 carries an N-linked (GlcNAc...) asparagine glycan.

The protein belongs to the peptidase S8 family.

The protein localises to the secreted. In terms of biological role, secreted subtilisin-like serine protease with keratinolytic activity that contributes to pathogenicity. The sequence is that of Subtilisin-like protease 2 (SUB2) from Trichophyton verrucosum (strain HKI 0517).